The primary structure comprises 1863 residues: Breast cancer type 1 susceptibility protein homolog (1863 aa).

M1 bears the N-acetylmethionine mark. The RING-type zinc-finger motif lies at 24 to 65 (CPICLELIKEPVSTKCDHIFCRFCMLKLLNQKKGPSQCPLCK). K109 participates in a covalent cross-link: Glycyl lysine isopeptide (Lys-Gly) (interchain with G-Cter in SUMO2). S114 bears the Phosphoserine mark. Composition is skewed to basic and acidic residues over residues 231 to 240 (KDITNTEHHQ) and 248 to 260 (TTEK…HPEK). The segment at 231–266 (KDITNTEHHQSSNNDLNTTEKHATERHPEKYQGSSV) is disordered. K300 is covalently cross-linked (Glycyl lysine isopeptide (Lys-Gly) (interchain with G-Cter in SUMO2)). A disordered region spans residues 305 to 336 (NKSKQPGLARSQHNRWTGSKETCNDRQTPSTE). Polar residues predominate over residues 318-334 (NRWTGSKETCNDRQTPS). Residue K338 forms a Glycyl lysine isopeptide (Lys-Gly) (interchain with G-Cter in SUMO2) linkage. Residues S394, S397, S422, and S433 each carry the phosphoserine modification. Glycyl lysine isopeptide (Lys-Gly) (interchain with G-Cter in SUMO2) cross-links involve residues K442, K458, and K518. S550 bears the Phosphoserine mark. K582 participates in a covalent cross-link: Glycyl lysine isopeptide (Lys-Gly) (interchain with G-Cter in SUMO2). Positions 653-699 (NYNQMPVRHSRNLQLMEDKESATGAKKSNKPNEQTSKRHASDTFPEL) are disordered. Phosphoserine is present on residues S693, S707, and S724. Glycyl lysine isopeptide (Lys-Gly) (interchain with G-Cter in SUMO2) cross-links involve residues K733 and K738. A phosphoserine mark is found at S752 and S839. Positions 886-914 (AHSRSLKKQSPKVTSECEQKEENQGKKES) are disordered. Residues 900–914 (SECEQKEENQGKKES) show a composition bias toward basic and acidic residues. Residues K917 and K986 each participate in a glycyl lysine isopeptide (Lys-Gly) (interchain with G-Cter in SUMO2) cross-link. Residue S987 is modified to Phosphoserine; by CHEK2. S1008 carries the phosphoserine modification. The span at 1042–1059 (SNINEVGSSTNEVGSSIN) shows a compositional bias: polar residues. The tract at residues 1042 to 1062 (SNINEVGSSTNEVGSSINEVG) is disordered. Residue K1079 forms a Glycyl lysine isopeptide (Lys-Gly) (interchain with G-Cter in SUMO2) linkage. S1143, S1189, S1191, S1211, S1217, S1218, S1280, S1328, S1336, S1342, and S1387 each carry phosphoserine. The segment at 1323-1397 (RMRHQSESQG…QSEILTTQQR (75 aa)) is disordered. A compositionally biased stretch (acidic residues) spans 1342–1360 (SDDEERGTGLEEDNQEEQS). Residues 1373–1397 (ESETSVSEDCSRLSSQSEILTTQQR) show a composition bias toward polar residues. Phosphothreonine is present on T1394. Residues 1397 to 1424 (RDTMQDNLIKLQQEMAELEAVLEQHGSQ) are interaction with PALB2. Phosphoserine occurs at positions 1423, 1457, 1524, and 1542. The disordered stretch occupies residues 1442–1501 (LRNPEQSTSEKAVLTSQKSSEYPINQNPEGLSADKFEVSADSSTSKNKEPGVERSSPSKC). Positions 1445-1470 (PEQSTSEKAVLTSQKSSEYPINQNPE) are enriched in polar residues. The tract at residues 1540–1618 (EKSGPHDLME…ESAQSPAAAH (79 aa)) is disordered. Over residues 1607 to 1618 (VAESAQSPAAAH) the composition is skewed to polar residues. BRCT domains are found at residues 1642-1736 (STER…DFEV) and 1756-1855 (PDRK…TYLI).

Heterodimer with BARD1. Part of the BRCA1-associated genome surveillance complex (BASC), which contains BRCA1, MSH2, MSH6, MLH1, ATM, BLM, PMS2 and the MRE11-RAD50-NBN protein (MRN) complex. This association could be a dynamic process changing throughout the cell cycle and within subnuclear domains. Component of the BRCA1-A complex, at least composed of BRCA1, BARD1, UIMC1/RAP80, ABRAXAS1, BRCC3/BRCC36, BABAM2 and BABAM1/NBA1. Interacts (via the BRCT domains) with ABRAXAS1 (phosphorylated form); this is important for recruitment to sites of DNA damage. Can form a heterotetramer with two molecules of ABRAXAS1 (phosphorylated form). Component of the BRCA1-RBBP8 complex. Interacts (via the BRCT domains) with RBBP8 ('Ser-327' phosphorylated form); the interaction ubiquitinates RBBP8, regulates CHEK1 activation, and involves RBBP8 in BRCA1-dependent G2/M checkpoint control on DNA damage. Associates with RNA polymerase II holoenzyme. Interacts with SMC1A, NELFB, DCLRE1C, CLSPN. CHEK1, CHEK2, BAP1, BRCC3, UBXN1 and PCLAF. Interacts (via BRCT domains) with BRIP1 (phosphorylated form). Interacts with FANCD2 (ubiquitinated form). Interacts with H2AX (phosphorylated on 'Ser-140'). Interacts (via the BRCT domains) with ACACA (phosphorylated form); the interaction prevents dephosphorylation of ACACA. Part of a BRCA complex containing BRCA1, BRCA2 and PALB2. Interacts directly with PALB2; the interaction is essential for its function in HRR. Interacts directly with BRCA2; the interaction occurs only in the presence of PALB2 which serves as the bridging protein. Interacts (via the BRCT domains) with LMO4; the interaction represses the transcriptional activity of BRCA1. Interacts (via the BRCT domains) with CCAR2 (via N-terminus); the interaction represses the transcriptional activator activity of BRCA1. Interacts with EXD2. Interacts (via C-terminus) with DHX9; this interaction is direct and links BRCA1 to the RNA polymerase II holoenzyme. Interacts with DNA helicase ZGRF1; the interaction is increased following DNA damage induction. In terms of processing, phosphorylated in response to IR, UV, and various stimuli that cause checkpoint activation, probably by ATM or ATR. Phosphorylation at Ser-987 by CHEK2 regulates mitotic spindle assembly. Phosphorylation by AURKA regulates centrosomal microtubule nucleation. Post-translationally, autoubiquitinated, undergoes 'Lys-6'-linked polyubiquitination. 'Lys-6'-linked polyubiquitination does not promote degradation.

Its subcellular location is the nucleus. The protein localises to the chromosome. It localises to the cytoplasm. It carries out the reaction S-ubiquitinyl-[E2 ubiquitin-conjugating enzyme]-L-cysteine + [acceptor protein]-L-lysine = [E2 ubiquitin-conjugating enzyme]-L-cysteine + N(6)-ubiquitinyl-[acceptor protein]-L-lysine.. It functions in the pathway protein modification; protein ubiquitination. Its function is as follows. E3 ubiquitin-protein ligase that specifically mediates the formation of 'Lys-6'-linked polyubiquitin chains and plays a central role in DNA repair by facilitating cellular responses to DNA damage. It is unclear whether it also mediates the formation of other types of polyubiquitin chains. The BRCA1-BARD1 heterodimer coordinates a diverse range of cellular pathways such as DNA damage repair, ubiquitination and transcriptional regulation to maintain genomic stability. Regulates centrosomal microtubule nucleation. Required for appropriate cell cycle arrests after ionizing irradiation in both the S-phase and the G2 phase of the cell cycle. Required for FANCD2 targeting to sites of DNA damage. Inhibits lipid synthesis by binding to inactive phosphorylated ACACA and preventing its dephosphorylation. Contributes to homologous recombination repair (HRR) via its direct interaction with PALB2, fine-tunes recombinational repair partly through its modulatory role in the PALB2-dependent loading of BRCA2-RAD51 repair machinery at DNA breaks. Component of the BRCA1-RBBP8 complex which regulates CHEK1 activation and controls cell cycle G2/M checkpoints on DNA damage via BRCA1-mediated ubiquitination of RBBP8. Acts as a transcriptional activator. In Macaca mulatta (Rhesus macaque), this protein is Breast cancer type 1 susceptibility protein homolog (BRCA1).